The sequence spans 227 residues: GTP:AMP phosphotransferase AK3, mitochondrial (227 aa).

GTP-binding residues include Gly-17, Gly-19, Lys-20, Gly-21, and Thr-22. N6-succinyllysine is present on Lys-20. At Lys-29 the chain carries N6-acetyllysine; alternate. An N6-succinyllysine; alternate modification is found at Lys-29. An N6-acetyllysine modification is found at Lys-34. At Ser-37 the chain carries Phosphoserine. Positions 37 to 66 are NMP; it reads SSGDLLRQNMLQGTEIAVLAKSFIDQGKLI. The AMP site is built by Ser-38 and Arg-43. Lys-57 bears the N6-succinyllysine mark. N6-acetyllysine; alternate is present on residues Lys-64 and Lys-80. 2 positions are modified to N6-succinyllysine; alternate: Lys-64 and Lys-80. Lys-64 is an AMP binding site. Residues Gly-91, Arg-94, and Gln-98 each coordinate AMP. An LID region spans residues 127–164; that stretch reads ARWIHPASGRVYNIEFNPPKTVGIDDLTGEPLIQREDD. Residues Arg-128, Tyr-138, Asn-139, Arg-161, and Arg-172 each contribute to the GTP site. Residues Lys-174 and Lys-189 each carry the N6-acetyllysine; alternate modification. Lys-174 and Lys-189 each carry N6-succinyllysine; alternate. A GTP-binding site is contributed by Thr-201. Lys-203 bears the N6-acetyllysine mark.

The protein belongs to the adenylate kinase family. AK3 subfamily. As to quaternary structure, monomer.

It is found in the mitochondrion matrix. It carries out the reaction a ribonucleoside 5'-triphosphate + AMP = a ribonucleoside 5'-diphosphate + ADP. The enzyme catalyses GTP + AMP = GDP + ADP. The catalysed reaction is ITP + AMP = IDP + ADP. Mitochondrial adenylate kinase with a specific GTP:AMP phosphotransferase activity. Could also use ITP as phosphate donor. Its physiological function is to recycle GTP into GDP which is necessary for the TCA cycle in the mitochondrial matrix. This is GTP:AMP phosphotransferase AK3, mitochondrial from Rattus norvegicus (Rat).